The primary structure comprises 420 residues: MMSLKIQPAVPKKSDKPSATNRDCQNFKREKNNLPFQLTDKSCNLDISIRQERKKTLIFSFFSGAGFLDLGFELSGFDIAFVNEVHPPFLEAYKYSRSRMDIPKPKYGYFKGSIDECLYAEKAKDLAGWVKKEKQNGIIVGFIGGPPCPDFSIAGKNKGKDGENGKLSQSYVDLICKNQPDFFVFENVKGLYRTAKHREFFNALKRQLSDFGYVCTEKLINAIEYGVPQDRERIILVGFLSQHVDALQKFDWDAHISFPDALEKDWPTTEEVGRVVSQPANIYPELTVQYWFNRNGVDTHPNASKHFQPRAGLEKFQTISEGDDKKKSYKRLHRWRYSPTAAYGNNEVHIHPYLPRRISAAEALAIQSLPKEFELPDNMTLSNMFKTIGNGVPFLAAKGIAMTLKSYLENHYERTKTDGC.

The disordered stretch occupies residues 1–23 (MMSLKIQPAVPKKSDKPSATNRD). The region spanning 56–411 (TLIFSFFSGA…MTLKSYLENH (356 aa)) is the SAM-dependent MTase C5-type domain. Residue C148 is part of the active site.

Belongs to the class I-like SAM-binding methyltransferase superfamily. C5-methyltransferase family.

It catalyses the reaction a 2'-deoxycytidine in DNA + S-adenosyl-L-methionine = a 5-methyl-2'-deoxycytidine in DNA + S-adenosyl-L-homocysteine + H(+). A methylase that recognizes the double-stranded sequence 5'-RCCGGB-3', methylates C-2 on both strands, and protects the DNA from cleavage by the NmeDI endonuclease. The chain is Type II methyltransferase M.NmeDI (nmeDIMP) from Neisseria meningitidis serogroup C.